Consider the following 307-residue polypeptide: 17-beta-hydroxysteroid dehydrogenase type 3 (307 aa).

Residues 6–26 (IIFVLTGTCAILVFGGKIASL) traverse the membrane as a helical segment. 47–76 (GKWAVITGGSDGIGRAYAEELSKQGMSVII) provides a ligand contact to NADP(+). Substrate is bound at residue Ser187. The active-site Proton acceptor is the Tyr200.

It belongs to the short-chain dehydrogenases/reductases (SDR) family. In terms of tissue distribution, expression shows strong sexual dimorphism. In female, highly expressed in ovaries, and at lower levels in skin muscle, eyes and liver. In males, strongly expressed in liver and at lower levels in testis, spleen, kidney, intestine and muscle.

The protein resides in the endoplasmic reticulum. It is found in the membrane. It carries out the reaction a 17beta-hydroxy steroid + NADP(+) = a 17-oxo steroid + NADPH + H(+). The catalysed reaction is testosterone + NADP(+) = androst-4-ene-3,17-dione + NADPH + H(+). It catalyses the reaction 3beta-hydroxyandrost-5-en-17-one + NADPH + H(+) = androst-5-en-3beta,17beta-diol + NADP(+). The enzyme catalyses 3beta-hydroxy-5alpha-androstan-17-one + NADPH + H(+) = 5alpha-androstane-3beta,17beta-diol + NADP(+). It carries out the reaction androst-4-ene-3,11,17-trione + NADPH + H(+) = 17beta-hydroxyandrost-4-ene-3,11-dione + NADP(+). The catalysed reaction is 11beta-hydroxyandrost-4-ene-3,17-dione + NADPH + H(+) = 11beta,17beta-dihydroxyandrost-4-ene-3-one + NADP(+). It functions in the pathway hormone biosynthesis; testosterone biosynthesis. It participates in steroid metabolism. In terms of biological role, catalyzes the conversion of 17-oxosteroids to 17beta-hydroxysteroids in the presence of NADPH. Favors the reduction of androstenedione to testosterone. Testosterone is the key androgen driving male development and function. Among further tested androgens epiandrosterone and dehydroepiandrosterone are accepted as substrates and reduced at C-17. Can also reduce 11-ketoandrostenedione as well as 11beta-hydroxyandrostenedione at C-17 to the respective testosterone forms. Cannot use androsterone and androstanedione as substrates. In Danio rerio (Zebrafish), this protein is 17-beta-hydroxysteroid dehydrogenase type 3 (hsd17b3).